Reading from the N-terminus, the 96-residue chain is UPF0235 protein VP2619 (96 aa).

The protein belongs to the UPF0235 family.

This Vibrio parahaemolyticus serotype O3:K6 (strain RIMD 2210633) protein is UPF0235 protein VP2619.